Consider the following 574-residue polypeptide: NEDD4-binding protein 2-like 2 (574 aa).

Disordered regions lie at residues 82–110 (HKEMPGDKVGGTESIGSQALQDGKPLAPA), 127–161 (YKPPEKKKCRERKNETATFNNTDSKRRQEEKQKFN), 182–204 (ENENEASQGSCKEPEPSQEQTLS), and 542–574 (TQKSTQTPLPLQGDQRWGGSLGSHSQVSITDDY). 2 stretches are compositionally biased toward basic and acidic residues: residues 129-141 (PPEKKKCRERKNE) and 149-161 (DSKRRQEEKQKFN). A coiled-coil region spans residues 162-196 (SKKLEIDTELSQFYKEIEELENENEASQGSCKEPE). A compositionally biased stretch (polar residues) spans 563–574 (GSHSQVSITDDY).

The protein is NEDD4-binding protein 2-like 2 (N4bp2l2) of Rattus norvegicus (Rat).